Consider the following 136-residue polypeptide: S-protein homolog 25 (136 aa).

The signal sequence occupies residues 1 to 20 (MNHSVFVILITITYFGLNQA). N-linked (GlcNAc...) asparagine glycosylation is found at Asn71 and Asn84.

This sequence belongs to the plant self-incompatibility (S1) protein family.

It is found in the secreted. This is S-protein homolog 25 from Arabidopsis thaliana (Mouse-ear cress).